Here is a 461-residue protein sequence, read N- to C-terminus: MTKEQTWSQRFESALHPAIARFNASIGFDIELIEYDLTGSQAHAKMLAHTGIISSEEGEQLVAGLEQIRQEHRQGKFHPGVDAEDVHFAVEKRLTEIVGDVGKKLHTARSRNDQVGTDTRLYLRDQIQQIKSELREFQGVLLDIAEKHVETLIPGYTHLQRAQPVSLAHHLLAYFQMAQRDWERLGDVSRRVNISPLGCGALAGTTFPIDRHYTAKLLDFDNIYANSLDGVSDRDFAIEFLCAASLIMVHLSRLAEEVILWSSEEFRFVILKDSCATGSSIMPQKKNPDVPELVRGKTGRVFGHLQAMLVIMKGLPLAYNKDLQEDKEGLFDSVNTVKASLEAMTILLREGLEFRTQRLAQAVTEDFSNATDVADYLAARGVPFREAYNLVGKVVKTSIAAGKLLKDLELEEWQQLHPAFAADIYEAISPRQVVAARNSHGGTGFVQVSKALIAARAQIDQ.

The protein belongs to the lyase 1 family. Argininosuccinate lyase subfamily. Homotetramer.

It localises to the cytoplasm. The catalysed reaction is 2-(N(omega)-L-arginino)succinate = fumarate + L-arginine. It participates in amino-acid biosynthesis; L-arginine biosynthesis; L-arginine from L-ornithine and carbamoyl phosphate: step 3/3. The protein is Argininosuccinate lyase of Nostoc punctiforme (strain ATCC 29133 / PCC 73102).